A 652-amino-acid chain; its full sequence is MRLAASIAVALPVIGAASAQGFPPPVMGVTVVKSKYDENVKITYKENDICETTEGVRSFTGHVHLPPDNDYFGVYQNYSINTFFWFFEAREDPKNAPLSIWLNGGPGSSSMIGLFQENGPCWINDDSKSTTNNSFSWNNRVNMLYIDQPNQVGFSYDELTNITYSTINDTISVADFSSGVPAQNLSTLVGTGSSQKPWATANNTVNAARSIWHFAQVWFQEFPEHKPNNNKISIWTESYGGRYGPSFASYFQEQNEKIKNHTITKEGEMHILNLDTLGVINGCIDLMFQAESYAEFPYNNTYGITAYTKEKRDAIIRDIHRPDGCFDKLAKCREAAKEGDPHFYSNNATVNAICAEANSDCDKYLMEPFQEANLGYYDIAHPLQDPFPPPFFKGFLSQSSVLSDMGSPVNFSHYSQAVGKSFHGVGDYARPDVRGFTGDIAYLLESGVKVALVYGDRDYICNWLGGEQVSLGLNYTGTEAFRKAGYADVKVNSSYVGGLVRQHGNFSFTRVFEAGHEVPGYQPETSLKIFERIMFNKDIATGELDIAQKQDYGTTGTESTFQVKNEIPPSPEPTCYLLSADGTCTPEQLNAIENGTAVVENYIIKSPAASKGNPPPTTTSSPTASPTAGSAMLKAPVAMLAISALTVLAFYL.

The first 19 residues, 1–19 (MRLAASIAVALPVIGAASA), serve as a signal peptide directing secretion. Cys50 and Cys121 form a disulfide bridge. Asn77, Asn132, Asn161, Asn168, Asn184, and Asn202 each carry an N-linked (GlcNAc...) asparagine glycan. Ser238 is a catalytic residue. N-linked (GlcNAc...) asparagine glycosylation is found at Asn260, Asn299, Asn347, and Asn410. Disulfide bonds link Cys325–Cys361 and Cys332–Cys354. Asp458 is a catalytic residue. Cys461 contributes to the substrate binding site. Residues Asn474, Asn492, and Asn505 are each glycosylated (N-linked (GlcNAc...) asparagine). Residue His516 is part of the active site. A substrate-binding site is contributed by Glu517. N-linked (GlcNAc...) asparagine glycosylation is present at Asn594. The tract at residues 608-628 (AASKGNPPPTTTSSPTASPTA) is disordered. Over residues 618–628 (TTSSPTASPTA) the composition is skewed to low complexity. A lipid anchor (GPI-anchor amidated glycine) is attached at Gly629. Positions 630–652 (SAMLKAPVAMLAISALTVLAFYL) are cleaved as a propeptide — removed in mature form.

It belongs to the peptidase S10 family.

The protein localises to the cell membrane. The catalysed reaction is Preferential release of a C-terminal arginine or lysine residue.. Its function is as follows. Extracellular serine carboxypeptidase that contributes to pathogenicity. This chain is Carboxypeptidase S1 homolog A (SCPA), found in Arthroderma benhamiae (strain ATCC MYA-4681 / CBS 112371) (Trichophyton mentagrophytes).